The sequence spans 154 residues: Myoglobin (154 aa).

The region spanning 2-148 is the Globin domain; that stretch reads GLSDGEWQLV…FRNDMAAKYK (147 aa). Phosphoserine is present on S4. H65 lines the nitrite pocket. H65 contacts O2. Phosphothreonine is present on T68. Heme b is bound at residue H94.

This sequence belongs to the globin family. As to quaternary structure, monomeric.

It localises to the cytoplasm. It is found in the sarcoplasm. It carries out the reaction Fe(III)-heme b-[protein] + nitric oxide + H2O = Fe(II)-heme b-[protein] + nitrite + 2 H(+). The enzyme catalyses H2O2 + AH2 = A + 2 H2O. Its function is as follows. Monomeric heme protein which primary function is to store oxygen and facilitate its diffusion within muscle tissues. Reversibly binds oxygen through a pentacoordinated heme iron and enables its timely and efficient release as needed during periods of heightened demand. Depending on the oxidative conditions of tissues and cells, and in addition to its ability to bind oxygen, it also has a nitrite reductase activity whereby it regulates the production of bioactive nitric oxide. Under stress conditions, like hypoxia and anoxia, it also protects cells against reactive oxygen species thanks to its pseudoperoxidase activity. This is Myoglobin (MB) from Ornithorhynchus anatinus (Duckbill platypus).